The sequence spans 1008 residues: MHPGGAIGGELIFSRLGDIVTRWPWVVIGCWTLLALMLPMTVPSLTELTQRHPVVILPVDAPSSVAAKKISQAFHEVDSENVLIVLLTDDKGLGPADETVYRTLVDRLRNDTKDVVVLQDFLSTPPLHELLVSKDGKAWILPIVLAGELGTSASYQAYAGVAGIVKQTLESTAGSSLKANLTGPASTVADLTDAGARDRTSIELVIAVLLLTILMIIYRNPITMLLPLITIGASLMTAQAVVSGVSVLAGLAVSNQMIVLLSAMIAGAGTDYAVFLISRYHDYIRMGSGSAQDAGCAVRQALISLGKVIAASAATVGITFLGMSFTKIRVFSTVGPALAIGIAVAFLAAVTLMPALLVLAGTRGWVAPRRDRAGAFWRRTGVRIVRRPVAYLSASMVILIVLALCASLVRFNYDDRKQIPASDESSVGYAALESHFPVGQAIPEYLLIQSPHDLRTPRALADMAELAQRVSQIPGIALVRGVTRPTGKPLEETSATYQAGMVGKQLGSASHLIGESTGDLNRLASGAGLLADKLGDVRIQVGQAVAGISGLLDNLAFAQKMFGDSKTLGEIDTAGKLVSSMRALGNMFGINFSTTMNDINWVGAVVIALDSSVLCDTNPICADARAQFHKLLTASEDGTLDNIAHLWKQLGSTQSSQTIGATVSGLEKTLTAVNTSLRSLGLDNPNVMRSKMIGLQNGVNDLASAGRRIADGVAVLVDQTRTMGTSLARASAFLMEMGQDASQPSMAGFNVPPQLLNTEDFKKLVQAFISPDGHSVRYFIQTDLNPFSSAAMDQVNTILNVATGAQPNTTLSDASIYLSGYTVTLRDTRDYYDRDLQLIVIVTMIVVLLILMALLRSIVAPIYLVGSVIVSYLSALGLCVLVFQVLLRQQLHWSVPGLAFVVLVAVGADYNMLLASRLRDESSHGLRASVIRTVRSTGGVITAAGLIFAASMFGLLLSSIATVVQAGFVLGSGILLDTFIVRTITVPAVAALLRRASWWPARPWGNNA.

A run of 12 helical transmembrane segments spans residues 23-43, 202-222, 225-245, 257-277, 301-321, 340-360, 389-409, 835-855, 862-882, 895-915, 940-960, and 961-981; these read WPWV…MTVP, IELV…RNPI, LLPL…VSGV, MIVL…VFLI, ALIS…ITFL, IGIA…LVLA, VAYL…ASLV, DLQL…MALL, IYLV…CVLV, VPGL…MLLA, VITA…LSSI, and ATVV…TFIV.

Belongs to the resistance-nodulation-cell division (RND) (TC 2.A.6) family. MmpL subfamily.

It localises to the cell membrane. In Mycobacterium leprae (strain TN), this protein is Probable transport protein MmpL10 (mmpL10).